A 214-amino-acid chain; its full sequence is tRNA (guanine-N(7)-)-methyltransferase (214 aa).

S-adenosyl-L-methionine-binding residues include Glu44, Glu69, Asp96, and Asp118. The active site involves Asp118. Substrate-binding positions include Lys122, Asp154, and 191 to 194; that span reads TEYE.

Belongs to the class I-like SAM-binding methyltransferase superfamily. TrmB family.

The catalysed reaction is guanosine(46) in tRNA + S-adenosyl-L-methionine = N(7)-methylguanosine(46) in tRNA + S-adenosyl-L-homocysteine. It participates in tRNA modification; N(7)-methylguanine-tRNA biosynthesis. Its function is as follows. Catalyzes the formation of N(7)-methylguanine at position 46 (m7G46) in tRNA. This chain is tRNA (guanine-N(7)-)-methyltransferase, found in Listeria monocytogenes serovar 1/2a (strain ATCC BAA-679 / EGD-e).